The primary structure comprises 197 residues: Imidazoleglycerol-phosphate dehydratase (197 aa).

This sequence belongs to the imidazoleglycerol-phosphate dehydratase family.

The protein localises to the cytoplasm. It catalyses the reaction D-erythro-1-(imidazol-4-yl)glycerol 3-phosphate = 3-(imidazol-4-yl)-2-oxopropyl phosphate + H2O. The protein operates within amino-acid biosynthesis; L-histidine biosynthesis; L-histidine from 5-phospho-alpha-D-ribose 1-diphosphate: step 6/9. The sequence is that of Imidazoleglycerol-phosphate dehydratase from Methylocella silvestris (strain DSM 15510 / CIP 108128 / LMG 27833 / NCIMB 13906 / BL2).